The following is a 292-amino-acid chain: Coiled-coil domain-containing protein 192 (292 aa).

A disordered region spans residues 28 to 55; sequence SVVPESDTSERSSMTSGSSESDIPQENK. Positions 38–49 are enriched in low complexity; that stretch reads RSSMTSGSSESD. Coiled-coil stretches lie at residues 65 to 174 and 222 to 258; these read QMAF…LATA and IMELSTQVSLQTERITQLKEVLEEKERKIQQLEAERS. A compositionally biased stretch (basic and acidic residues) spans 251-267; it reads QQLEAERSPHPPQEVKD. Residues 251–292 form a disordered region; that stretch reads QQLEAERSPHPPQEVKDPPGCLPEAPVFSTHDIPPVVSDENL.

This Homo sapiens (Human) protein is Coiled-coil domain-containing protein 192.